Here is a 274-residue protein sequence, read N- to C-terminus: Diaminopimelate epimerase (274 aa).

Substrate contacts are provided by asparagine 11, glutamine 44, and asparagine 64. Cysteine 73 acts as the Proton donor in catalysis. Substrate is bound by residues 74 to 75, asparagine 157, asparagine 190, and 208 to 209; these read GN and ER. Residue cysteine 217 is the Proton acceptor of the active site. A substrate-binding site is contributed by 218-219; that stretch reads GS.

This sequence belongs to the diaminopimelate epimerase family. As to quaternary structure, homodimer.

It localises to the cytoplasm. The enzyme catalyses (2S,6S)-2,6-diaminopimelate = meso-2,6-diaminopimelate. Its pathway is amino-acid biosynthesis; L-lysine biosynthesis via DAP pathway; DL-2,6-diaminopimelate from LL-2,6-diaminopimelate: step 1/1. Catalyzes the stereoinversion of LL-2,6-diaminopimelate (L,L-DAP) to meso-diaminopimelate (meso-DAP), a precursor of L-lysine and an essential component of the bacterial peptidoglycan. The sequence is that of Diaminopimelate epimerase from Mannheimia succiniciproducens (strain KCTC 0769BP / MBEL55E).